We begin with the raw amino-acid sequence, 232 residues long: Dephospho-CoA kinase (232 aa).

The DPCK domain occupies Ile3–Arg206. Gly8 to Ser15 contributes to the ATP binding site.

Belongs to the CoaE family.

Its subcellular location is the peroxisome. The enzyme catalyses 3'-dephospho-CoA + ATP = ADP + CoA + H(+). It functions in the pathway cofactor biosynthesis; coenzyme A biosynthesis; CoA from (R)-pantothenate: step 5/5. In terms of biological role, catalyzes the phosphorylation of the 3'-hydroxyl group of dephosphocoenzyme A to form coenzyme A. The polypeptide is Dephospho-CoA kinase (Arabidopsis thaliana (Mouse-ear cress)).